We begin with the raw amino-acid sequence, 318 residues long: Inner membrane protein YbhN (318 aa).

Residues Met-1–Lys-13 are Periplasmic-facing. Residues Ile-14–Val-34 form a helical membrane-spanning segment. The Cytoplasmic segment spans residues Asp-35–Ala-50. The helical transmembrane segment at Leu-51 to Leu-71 threads the bilayer. Residues Ala-72–Val-85 lie on the Periplasmic side of the membrane. The helical transmembrane segment at Met-86 to Ile-106 threads the bilayer. Residues Gly-107–Arg-125 lie on the Cytoplasmic side of the membrane. The chain crosses the membrane as a helical span at residues Ile-126–Phe-146. The Periplasmic segment spans residues Thr-147 to Arg-165. The helical transmembrane segment at Ile-166–Lys-186 threads the bilayer. At His-187–Ala-205 the chain is on the cytoplasmic side. Residues Leu-206–Leu-226 form a helical membrane-spanning segment. Residues Leu-227 to Tyr-233 lie on the Periplasmic side of the membrane. Transmembrane regions (helical) follow at residues Phe-234 to Ala-254 and Gly-255 to Gly-275. The Periplasmic portion of the chain corresponds to Thr-276–Ile-277. A helical transmembrane segment spans residues Ile-278–Ile-298. The Cytoplasmic portion of the chain corresponds to Cys-299 to Met-318.

This sequence to Synechocystis PCC 6803 slr0712.

Its subcellular location is the cell inner membrane. This chain is Inner membrane protein YbhN (ybhN), found in Escherichia coli (strain K12).